A 502-amino-acid chain; its full sequence is TGF-beta-activated kinase 1 and MAP3K7-binding protein 1 (502 aa).

The disordered stretch occupies residues 1–21 (MAAQRRSLLQSEQQPSWTDDL). Ser-7 carries the post-translational modification Phosphoserine. The segment covering 7-17 (SLLQSEQQPSW) has biased composition (polar residues). The PPM-type phosphatase domain maps to 28–365 (GVGSASNRSY…EDMTLLVRNF (338 aa)). Residue Ser-393 is glycosylated (O-linked (GlcNAc) serine). Over residues 414–437 (QMVNGSHSASTLDEATPTLTNQSP) the composition is skewed to polar residues. The interval 414–476 (QMVNGSHSAS…SLPPGEDGRV (63 aa)) is disordered. The residue at position 421 (Ser-421) is a Phosphoserine. Position 429 is a phosphothreonine (Thr-429). Ser-436 is subject to Phosphoserine. The segment covering 438 to 455 (TLTLQSTNTHTQSSSSSS) has biased composition (low complexity). At Thr-440 the chain carries Phosphothreonine.

Interacts with XIAP and BIRC7. Interacts with TRAF6 and MAP3K7; during IL-1 signaling. Identified in the TRIKA2 complex composed of MAP3K7, TAB1 and TAB2. Interacts with TRAF6 and MAPK14; these interactions allow MAPK14 autophosphorylation. Interacts with STING1; interaction takes place following cGAMP activation and promotes TAB1 recruitment to the endoplasmic reticulum, triggering MAP3K7/TAK1 activation and STING1 phosphorylation. Post-translationally, phosphorylated at all three sites Ser-421, Thr-429 and Ser-436 by MAPK14 when cells were exposed to cellular stresses, or stimulated with TNF-alpha, IL1 or LPS. These phosphorylations inhibit TAK1 activation by a feedback control mechanism. Dephosphorylated by DUSP14 at Ser-436, leading to TAB1-MAP3K7/TAK1 complex inactivation in T-cells. Ubiquitinated by MAP3K1 with 'Lys-63'-linked polyubiquitin; leading to activation of TAK1 and of JNK and p38 MAP kinases following EGF and TGF-beta stimulation. Ubiquitinated by ITCH with 'Lys-48'-linked polyubiquitin; leading to proteasomal degradation. Ubiquitinated by RNF114 during maternal-to-zygotic transition; leading to degradation. In terms of processing, O-GlcNAcylated at Ser-393 is required for full MAP3K7/TAK1 activation upon stimulation with IL-1 or osmotic stress.

The protein localises to the cytoplasm. It localises to the cytosol. It is found in the endoplasmic reticulum membrane. Key adapter protein that plays an essential role in JNK and NF-kappa-B activation and proinflammatory cytokines production in response to stimulation with TLRs and cytokines. Mechanistically, associates with the catalytic domain of MAP3K7/TAK1 to trigger MAP3K7/TAK1 autophosphorylation leading to its full activation. Similarly, associates with MAPK14 and triggers its autophosphorylation and subsequent activation. In turn, MAPK14 phosphorylates TAB1 and inhibits MAP3K7/TAK1 activation in a feedback control mechanism. Also plays a role in recruiting MAPK14 to the TAK1 complex for the phosphorylation of the TAB2 and TAB3 regulatory subunits. This chain is TGF-beta-activated kinase 1 and MAP3K7-binding protein 1 (Tab1), found in Mus musculus (Mouse).